A 416-amino-acid chain; its full sequence is UBX domain-containing protein 4 (416 aa).

Residues 273–350 (KAISECLLRV…EFGSKTMLLF (78 aa)) form the UBX domain. The segment at 376–402 (TRTTPSVNTINKSNPQGPSDNATSIKK) is disordered. Residues 378-402 (TTPSVNTINKSNPQGPSDNATSIKK) show a composition bias toward polar residues.

It localises to the nucleus. Its subcellular location is the cytoplasm. Functionally, involved in CDC48-dependent protein degradation through the ubiquitin/proteasome pathway. The sequence is that of UBX domain-containing protein 4 (UBX4) from Saccharomyces cerevisiae (strain ATCC 204508 / S288c) (Baker's yeast).